Reading from the N-terminus, the 132-residue chain is Cytochrome B5 isoform C (132 aa).

The region spanning 2–78 is the Cytochrome b5 heme-binding domain; it reads ANLISFHDVA…MKKYCIGDVD (77 aa). Residues His37 and His61 each coordinate heme. Residues 110-129 form a helical membrane-spanning segment; sequence LLIYLIPLLILGVAFALRFY.

The protein belongs to the cytochrome b5 family. As to quaternary structure, interacts with CER1, BI-1, FAH1 and FAH2.

The protein localises to the endoplasmic reticulum membrane. Membrane bound hemoprotein which function as an electron carrier for several membrane bound oxygenases, including fatty acid desaturases. The protein is Cytochrome B5 isoform C of Arabidopsis thaliana (Mouse-ear cress).